We begin with the raw amino-acid sequence, 412 residues long: Tyrosine--tRNA ligase 1 (412 aa).

Tyr-41 provides a ligand contact to L-tyrosine. Positions 46–55 (ATADSLHVGH) match the 'HIGH' region motif. Residues Tyr-174 and Gln-178 each contribute to the L-tyrosine site. The 'KMSKS' region signature appears at 234–238 (KMGKS). ATP is bound at residue Lys-237. The 64-residue stretch at 348 to 411 (LSLTDLLLEH…KKQHLHLRLE (64 aa)) folds into the S4 RNA-binding domain.

The protein belongs to the class-I aminoacyl-tRNA synthetase family. TyrS type 1 subfamily. In terms of assembly, homodimer.

It is found in the cytoplasm. The catalysed reaction is tRNA(Tyr) + L-tyrosine + ATP = L-tyrosyl-tRNA(Tyr) + AMP + diphosphate + H(+). Functionally, catalyzes the attachment of tyrosine to tRNA(Tyr) in a two-step reaction: tyrosine is first activated by ATP to form Tyr-AMP and then transferred to the acceptor end of tRNA(Tyr). This is Tyrosine--tRNA ligase 1 from Pseudomonas aeruginosa (strain ATCC 15692 / DSM 22644 / CIP 104116 / JCM 14847 / LMG 12228 / 1C / PRS 101 / PAO1).